A 216-amino-acid chain; its full sequence is Acyl-homoserine-lactone synthase (216 aa).

The protein belongs to the autoinducer synthase family.

It catalyses the reaction a fatty acyl-[ACP] + S-adenosyl-L-methionine = an N-acyl-L-homoserine lactone + S-methyl-5'-thioadenosine + holo-[ACP] + H(+). Functionally, required for the synthesis of OHHL (N-(3-oxohexanoyl)-L-homoserine lactone), an autoinducer molecule which binds to CarR and thus acts in the control of the biosynthesis of carbapenem antibiotics. The sequence is that of Acyl-homoserine-lactone synthase (carI) from Pectobacterium carotovorum subsp. carotovorum (Erwinia carotovora subsp. carotovora).